The chain runs to 662 residues: Calcium-dependent protease (662 aa).

The Peptidase S8 domain maps to 196-529 (QWHLKETTIG…YGRINALKAV (334 aa)). Residues aspartate 233, histidine 270, and serine 466 each act as charge relay system in the active site. Positions 535 to 662 (AQPEPVSIFT…IRSLTIELGF (128 aa)) constitute a P/Homo B domain.

It belongs to the peptidase S8 family.

The protein resides in the cytoplasm. In terms of biological role, degrades phycobiliproteins in vitro. Has a substrate specificity similar to that of trypsin. The sequence is that of Calcium-dependent protease (prcA) from Nostoc sp. (strain PCC 7120 / SAG 25.82 / UTEX 2576).